Here is a 384-residue protein sequence, read N- to C-terminus: S-adenosylmethionine synthase (384 aa).

Histidine 16 contacts ATP. Residue aspartate 18 coordinates Mg(2+). Residue glutamate 44 coordinates K(+). L-methionine-binding residues include glutamate 57 and glutamine 100. The flexible loop stretch occupies residues 100-110 (QSADIAMGVDE). Residues 165–167 (DAK), aspartate 240, 246–247 (RK), alanine 263, and lysine 267 contribute to the ATP site. Aspartate 240 contributes to the L-methionine binding site. L-methionine is bound at residue lysine 271.

Belongs to the AdoMet synthase family. Homotetramer; dimer of dimers. Mg(2+) is required as a cofactor. Requires K(+) as cofactor.

The protein localises to the cytoplasm. The enzyme catalyses L-methionine + ATP + H2O = S-adenosyl-L-methionine + phosphate + diphosphate. It participates in amino-acid biosynthesis; S-adenosyl-L-methionine biosynthesis; S-adenosyl-L-methionine from L-methionine: step 1/1. Catalyzes the formation of S-adenosylmethionine (AdoMet) from methionine and ATP. The overall synthetic reaction is composed of two sequential steps, AdoMet formation and the subsequent tripolyphosphate hydrolysis which occurs prior to release of AdoMet from the enzyme. This Cellvibrio japonicus (strain Ueda107) (Pseudomonas fluorescens subsp. cellulosa) protein is S-adenosylmethionine synthase.